Here is a 311-residue protein sequence, read N- to C-terminus: Ribonuclease Z (311 aa).

Zn(2+) contacts are provided by histidine 63, histidine 65, aspartate 67, histidine 68, histidine 141, aspartate 212, and histidine 270. Catalysis depends on aspartate 67, which acts as the Proton acceptor.

The protein belongs to the RNase Z family. Homodimer. It depends on Zn(2+) as a cofactor.

It carries out the reaction Endonucleolytic cleavage of RNA, removing extra 3' nucleotides from tRNA precursor, generating 3' termini of tRNAs. A 3'-hydroxy group is left at the tRNA terminus and a 5'-phosphoryl group is left at the trailer molecule.. Zinc phosphodiesterase, which displays some tRNA 3'-processing endonuclease activity. Probably involved in tRNA maturation, by removing a 3'-trailer from precursor tRNA. This chain is Ribonuclease Z, found in Lactiplantibacillus plantarum (strain ATCC BAA-793 / NCIMB 8826 / WCFS1) (Lactobacillus plantarum).